A 180-amino-acid polypeptide reads, in one-letter code: Large ribosomal subunit protein uL5 (180 aa).

The protein belongs to the universal ribosomal protein uL5 family. As to quaternary structure, part of the 50S ribosomal subunit; part of the 5S rRNA/L5/L18/L25 subcomplex. Contacts the 5S rRNA and the P site tRNA. Forms a bridge to the 30S subunit in the 70S ribosome.

This is one of the proteins that bind and probably mediate the attachment of the 5S RNA into the large ribosomal subunit, where it forms part of the central protuberance. In the 70S ribosome it contacts protein S13 of the 30S subunit (bridge B1b), connecting the 2 subunits; this bridge is implicated in subunit movement. Contacts the P site tRNA; the 5S rRNA and some of its associated proteins might help stabilize positioning of ribosome-bound tRNAs. This is Large ribosomal subunit protein uL5 from Leuconostoc mesenteroides subsp. mesenteroides (strain ATCC 8293 / DSM 20343 / BCRC 11652 / CCM 1803 / JCM 6124 / NCDO 523 / NBRC 100496 / NCIMB 8023 / NCTC 12954 / NRRL B-1118 / 37Y).